Reading from the N-terminus, the 120-residue chain is ESAT-6-like protein EsxQ (120 aa).

This sequence belongs to the WXG100 family. ESAT-6 subfamily.

The protein localises to the secreted. In Mycobacterium bovis (strain ATCC BAA-935 / AF2122/97), this protein is ESAT-6-like protein EsxQ.